Consider the following 627-residue polypeptide: Translation factor GUF1, mitochondrial (627 aa).

The transit peptide at Met-1–Tyr-16 directs the protein to the mitochondrion. One can recognise a tr-type G domain in the interval Glu-40–Val-221. Residues Ala-49–Ser-56, Asp-114–His-118, and Asn-168–Asp-171 contribute to the GTP site.

This sequence belongs to the TRAFAC class translation factor GTPase superfamily. Classic translation factor GTPase family. LepA subfamily.

Its subcellular location is the mitochondrion inner membrane. The catalysed reaction is GTP + H2O = GDP + phosphate + H(+). In terms of biological role, promotes mitochondrial protein synthesis. May act as a fidelity factor of the translation reaction, by catalyzing a one-codon backward translocation of tRNAs on improperly translocated ribosomes. Binds to mitochondrial ribosomes in a GTP-dependent manner. The polypeptide is Translation factor GUF1, mitochondrial (Fusarium vanettenii (strain ATCC MYA-4622 / CBS 123669 / FGSC 9596 / NRRL 45880 / 77-13-4) (Fusarium solani subsp. pisi)).